Here is a 163-residue protein sequence, read N- to C-terminus: MATPRRAQLDDKTDITGARVVIVEARFYDDIQDALLEGAKTELDAAGVAYDILSVPGALEIPAAIAIALDAAKKNGRPYEGAVALGCVIRGDTIHFEIVSAESARGLMDLSVSRSLALGNGIITVNNTEQAWERARADDLNKGGDAARAAIQMIRIKRKLAKP.

Residues Phe27, 58-60, and 87-89 each bind 5-amino-6-(D-ribitylamino)uracil; these read ALE and CVI. 92–93 serves as a coordination point for (2S)-2-hydroxy-3-oxobutyl phosphate; it reads DT. His95 functions as the Proton donor in the catalytic mechanism. Position 120 (Asn120) interacts with 5-amino-6-(D-ribitylamino)uracil. Arg134 contacts (2S)-2-hydroxy-3-oxobutyl phosphate.

It belongs to the DMRL synthase family.

It catalyses the reaction (2S)-2-hydroxy-3-oxobutyl phosphate + 5-amino-6-(D-ribitylamino)uracil = 6,7-dimethyl-8-(1-D-ribityl)lumazine + phosphate + 2 H2O + H(+). The protein operates within cofactor biosynthesis; riboflavin biosynthesis; riboflavin from 2-hydroxy-3-oxobutyl phosphate and 5-amino-6-(D-ribitylamino)uracil: step 1/2. Catalyzes the formation of 6,7-dimethyl-8-ribityllumazine by condensation of 5-amino-6-(D-ribitylamino)uracil with 3,4-dihydroxy-2-butanone 4-phosphate. This is the penultimate step in the biosynthesis of riboflavin. This chain is 6,7-dimethyl-8-ribityllumazine synthase, found in Afipia carboxidovorans (strain ATCC 49405 / DSM 1227 / KCTC 32145 / OM5) (Oligotropha carboxidovorans).